We begin with the raw amino-acid sequence, 78 residues long: Acyl carrier protein (78 aa).

One can recognise a Carrier domain in the interval 4–78 (AQIKEKVYDI…QQAIDYIVKK (75 aa)). O-(pantetheine 4'-phosphoryl)serine is present on Ser-39.

The protein belongs to the acyl carrier protein (ACP) family. 4'-phosphopantetheine is transferred from CoA to a specific serine of apo-ACP by AcpS. This modification is essential for activity because fatty acids are bound in thioester linkage to the sulfhydryl of the prosthetic group.

The protein resides in the cytoplasm. The protein operates within lipid metabolism; fatty acid biosynthesis. Functionally, carrier of the growing fatty acid chain in fatty acid biosynthesis. The polypeptide is Acyl carrier protein (Chlorobium phaeobacteroides (strain DSM 266 / SMG 266 / 2430)).